The following is a 106-amino-acid chain: 3-phenylpropionate/cinnamic acid dioxygenase ferredoxin subunit (106 aa).

The Rieske domain occupies 4 to 99 (IYACPVADVP…VHVEGGDIFI (96 aa)). Residues C42, H44, C62, and H65 each coordinate [2Fe-2S] cluster.

It belongs to the bacterial ring-hydroxylating dioxygenase ferredoxin component family. As to quaternary structure, this dioxygenase system consists of four proteins: the two subunits of the hydroxylase component (HcaE and HcaF), a ferredoxin (HcaC) and a ferredoxin reductase (HcaD). Requires [2Fe-2S] cluster as cofactor.

It functions in the pathway aromatic compound metabolism; 3-phenylpropanoate degradation. Functionally, part of the multicomponent 3-phenylpropionate dioxygenase, that converts 3-phenylpropionic acid (PP) and cinnamic acid (CI) into 3-phenylpropionate-dihydrodiol (PP-dihydrodiol) and cinnamic acid-dihydrodiol (CI-dihydrodiol), respectively. This protein seems to be a 2Fe-2S ferredoxin. This Escherichia coli O139:H28 (strain E24377A / ETEC) protein is 3-phenylpropionate/cinnamic acid dioxygenase ferredoxin subunit.